A 344-amino-acid polypeptide reads, in one-letter code: Holliday junction branch migration complex subunit RuvB (344 aa).

Positions 1–185 (MTERSDRDVS…FGFTAHMDFY (185 aa)) are large ATPase domain (RuvB-L). Residues Leu24, Arg25, Gly66, Lys69, Thr70, Ser71, 132 to 134 (EDF), Arg175, Tyr185, and Arg222 each bind ATP. Residue Thr70 coordinates Mg(2+). The tract at residues 186–256 (EPAELERVLA…VAKAALEVYD (71 aa)) is small ATPAse domain (RuvB-S). The head domain (RuvB-H) stretch occupies residues 259–344 (ELGLDRLDRA…VGASQPGLFE (86 aa)). Residues Arg314 and Arg319 each contribute to the DNA site.

The protein belongs to the RuvB family. Homohexamer. Forms an RuvA(8)-RuvB(12)-Holliday junction (HJ) complex. HJ DNA is sandwiched between 2 RuvA tetramers; dsDNA enters through RuvA and exits via RuvB. An RuvB hexamer assembles on each DNA strand where it exits the tetramer. Each RuvB hexamer is contacted by two RuvA subunits (via domain III) on 2 adjacent RuvB subunits; this complex drives branch migration. In the full resolvosome a probable DNA-RuvA(4)-RuvB(12)-RuvC(2) complex forms which resolves the HJ.

The protein localises to the cytoplasm. It catalyses the reaction ATP + H2O = ADP + phosphate + H(+). Functionally, the RuvA-RuvB-RuvC complex processes Holliday junction (HJ) DNA during genetic recombination and DNA repair, while the RuvA-RuvB complex plays an important role in the rescue of blocked DNA replication forks via replication fork reversal (RFR). RuvA specifically binds to HJ cruciform DNA, conferring on it an open structure. The RuvB hexamer acts as an ATP-dependent pump, pulling dsDNA into and through the RuvAB complex. RuvB forms 2 homohexamers on either side of HJ DNA bound by 1 or 2 RuvA tetramers; 4 subunits per hexamer contact DNA at a time. Coordinated motions by a converter formed by DNA-disengaged RuvB subunits stimulates ATP hydrolysis and nucleotide exchange. Immobilization of the converter enables RuvB to convert the ATP-contained energy into a lever motion, pulling 2 nucleotides of DNA out of the RuvA tetramer per ATP hydrolyzed, thus driving DNA branch migration. The RuvB motors rotate together with the DNA substrate, which together with the progressing nucleotide cycle form the mechanistic basis for DNA recombination by continuous HJ branch migration. Branch migration allows RuvC to scan DNA until it finds its consensus sequence, where it cleaves and resolves cruciform DNA. The polypeptide is Holliday junction branch migration complex subunit RuvB (Mycobacterium tuberculosis (strain ATCC 25177 / H37Ra)).